Consider the following 408-residue polypeptide: Dual-specificity RNA methyltransferase RlmN (408 aa).

The active-site Proton acceptor is Glu126. Residues 132 to 373 enclose the Radical SAM core domain; the sequence is EEGRGTLCLS…NQAGYASPIR (242 aa). Cys139 and Cys384 are joined by a disulfide. 3 residues coordinate [4Fe-4S] cluster: Cys146, Cys150, and Cys153. Residues 210-211, Ser242, 264-266, and Asn341 each bind S-adenosyl-L-methionine; these read GE and SLH. The S-methylcysteine intermediate role is filled by Cys384.

This sequence belongs to the radical SAM superfamily. RlmN family. [4Fe-4S] cluster serves as cofactor.

The protein localises to the cytoplasm. The enzyme catalyses adenosine(2503) in 23S rRNA + 2 reduced [2Fe-2S]-[ferredoxin] + 2 S-adenosyl-L-methionine = 2-methyladenosine(2503) in 23S rRNA + 5'-deoxyadenosine + L-methionine + 2 oxidized [2Fe-2S]-[ferredoxin] + S-adenosyl-L-homocysteine. It carries out the reaction adenosine(37) in tRNA + 2 reduced [2Fe-2S]-[ferredoxin] + 2 S-adenosyl-L-methionine = 2-methyladenosine(37) in tRNA + 5'-deoxyadenosine + L-methionine + 2 oxidized [2Fe-2S]-[ferredoxin] + S-adenosyl-L-homocysteine. In terms of biological role, specifically methylates position 2 of adenine 2503 in 23S rRNA and position 2 of adenine 37 in tRNAs. m2A2503 modification seems to play a crucial role in the proofreading step occurring at the peptidyl transferase center and thus would serve to optimize ribosomal fidelity. The chain is Dual-specificity RNA methyltransferase RlmN from Bartonella tribocorum (strain CIP 105476 / IBS 506).